A 902-amino-acid chain; its full sequence is Histone-lysine N-methyltransferase CLF (902 aa).

A compositionally biased stretch (low complexity) spans 1 to 14; that stretch reads MASEASPSSSATRS. Disordered regions lie at residues 1 to 33, 73 to 107, and 335 to 522; these read MASE…KEVS, SMER…SNNN, and GKTG…FMGE. Basic and acidic residues-rich tracts occupy residues 15 to 33 and 78 to 95; these read EPPK…KEVS and GSCK…RDSP. Polar residues predominate over residues 337 to 357; that stretch reads TGTSSDGAGTKTTPTKFSSKL. Over residues 394-403 the composition is skewed to low complexity; sequence DKVSSSPKVK. Basic residues predominate over residues 404-416; it reads GSGRRVGRKRNKN. Low complexity predominate over residues 438–449; it reads SDSIASGSCSPS. A compositionally biased stretch (polar residues) spans 459 to 473; sequence ATSSSQKHVKSGNSG. In terms of domain architecture, SANT spans 531–581; it reads TNKLWRPLEKSLFDKGVEIFGMNSCLIARNLLSGFKSCWEVFQYMTCSENK. One can recognise a CXC domain in the interval 638 to 737; it reads RKRITEKKDQ…SLGVPSQRGD (100 aa). An SET domain is found at 752 to 867; sequence QRVLLGISDV…AGEELFYDYR (116 aa). Y866 lines the S-adenosyl-L-methionine pocket. A compositionally biased stretch (basic and acidic residues) spans 875–890; sequence AWAKKPEAPGSKKDEN. The interval 875–902 is disordered; it reads AWAKKPEAPGSKKDENVTPSVGRPKKLA.

It belongs to the class V-like SAM-binding methyltransferase superfamily. Histone-lysine methyltransferase family. EZ subfamily. As to quaternary structure, probable component of a PcG complex. In plants, PcG complexes are probably composed of a member of the EZ family (CLF or MEA), FIE, and a member of the VEFS family (FIS2, VRN2 or EMF2). Interacts with FIE. Interacts with RING1A. Binds to ALP1. Interacts with BLI. Binds to ATX1 in the nucleus. Interacts with EOL1. Interacts (via SANT domain) with HXK1 in the nucleus. Strongly expressed throughout the apical meristem, leaf primordia, and leaves of 7-8 day-old seedling. Weakly expressed in the vasculature of hypocotyl. Strongly expressed throughout the young stages 1 and 2 floral meristems that arose on the flanks of the apex. In stage 3 and 4 flowers, it is expressed in the emerging sepal primordia and in the dome of the floral meristem. During stages 6 and 7, it is strongly expressed in developing petal and stamen, and weakly expressed in the sepals. Late in floral development, at stage 12, it is weakly expressed in all floral whorls, and expressed at intermediate level in petals and ovules.

The protein resides in the nucleus. It carries out the reaction L-lysyl-[histone] + S-adenosyl-L-methionine = N(6)-methyl-L-lysyl-[histone] + S-adenosyl-L-homocysteine + H(+). Functionally, polycomb group (PcG) protein. Catalytic subunit of some PcG multiprotein complex, which methylates 'Lys-27' of histone H3, leading to transcriptional repression of the affected target genes, mainly abscisic acid (ABA) responsive elements. Required to regulate floral development by repressing the AGAMOUS homeotic gene in leaves, inflorescence stems and flowers. Together with ATX1, modulates AG nucleosome methylation statement. Regulates the antero-posterior organization of the endosperm, as well as the division and elongation rates of leaf cells. PcG proteins act by forming multiprotein complexes, which are required to maintain the transcriptionally repressive state of homeotic genes throughout development. PcG proteins are not required to initiate repression, but to maintain it during later stages of development. Forms a nuclear complex with EZA1/SWN and HXK1 to target common glucose-responsive genes and regulate glucose signaling by glucose-mediated gene repression. Affects the recruitment of HXK1 to the target chromatin. The protein is Histone-lysine N-methyltransferase CLF of Arabidopsis thaliana (Mouse-ear cress).